Consider the following 505-residue polypeptide: Flagellin (505 aa).

This sequence belongs to the bacterial flagellin family.

The protein localises to the secreted. It localises to the bacterial flagellum. Functionally, flagellin is the subunit protein which polymerizes to form the filaments of bacterial flagella. The polypeptide is Flagellin (fliC) (Salmonella muenchen).